The sequence spans 412 residues: Proteasome-activating nucleotidase (412 aa).

Positions 18 to 72 form a coiled coil; sequence YRYLVDRVAGMESQNQELKEQIRQLESDKRYIETQKIRYEREVRKLKSEIEHLKT. ATP-binding positions include 197-202 and His-336; that span reads GTGKTL. The tract at residues 410–412 is docks into pockets in the proteasome alpha-ring to cause gate opening; it reads MFA.

The protein belongs to the AAA ATPase family. As to quaternary structure, homohexamer. The hexameric complex has a two-ring architecture resembling a top hat that caps the 20S proteasome core at one or both ends. Upon ATP-binding, the C-terminus of PAN interacts with the alpha-rings of the proteasome core by binding to the intersubunit pockets.

The protein resides in the cytoplasm. Functionally, ATPase which is responsible for recognizing, binding, unfolding and translocation of substrate proteins into the archaeal 20S proteasome core particle. Is essential for opening the gate of the 20S proteasome via an interaction with its C-terminus, thereby allowing substrate entry and access to the site of proteolysis. Thus, the C-termini of the proteasomal ATPase function like a 'key in a lock' to induce gate opening and therefore regulate proteolysis. Unfolding activity requires energy from ATP hydrolysis, whereas ATP binding alone promotes ATPase-20S proteasome association which triggers gate opening, and supports translocation of unfolded substrates. In Methanospirillum hungatei JF-1 (strain ATCC 27890 / DSM 864 / NBRC 100397 / JF-1), this protein is Proteasome-activating nucleotidase.